The primary structure comprises 1634 residues: Probable serine/threonine-protein kinase DDB_G0282895 (1634 aa).

One copy of the MORN 1 repeat lies at 40–63; it reads YKGNLNENKLKNGKGTFLFPNSIY. The interval 84–131 is disordered; sequence QKIQKKSSQSKSQQQPPSQTKKSSSPINLSPRLQGQNPTITTNGSNNN. Residues 89–109 show a composition bias toward low complexity; the sequence is KSSQSKSQQQPPSQTKKSSSP. Over residues 110–119 the composition is skewed to polar residues; it reads INLSPRLQGQ. Positions 120–131 are enriched in low complexity; the sequence is NPTITTNGSNNN. The stretch at 169–191 is one MORN 2 repeat; that stretch reads YNGKWINGKANGIGCFHFSKDDS. Composition is skewed to low complexity over residues 273 to 292 and 318 to 339; these read SNNNSNGTTSPTSPSILSPT and SGSGFCSPSSSLSIKMSSPISS. Disordered stretches follow at residues 273–367, 658–750, and 783–816; these read SNNN…QQQQ, TTAT…TFSV, and SSILNNNNNNNNNNNNNNNNNNNNNNNNNNNCGQ. The segment covering 340 to 351 has biased composition (polar residues); that stretch reads GLQHSKTQPNVS. 3 stretches are compositionally biased toward low complexity: residues 352 to 367, 658 to 688, and 703 to 715; these read QSQNQQIQQQQQQQQQ, TTATPNNNNNSSGNSKLTTTTHLTNNTTTTT, and PPSQSSSSSSPSS. Over residues 716-732 the composition is skewed to polar residues; it reads DQTNLPSIAISSSNGIS. Low complexity predominate over residues 787-813; it reads NNNNNNNNNNNNNNNNNNNNNNNNNNN. The chain crosses the membrane as a helical span at residues 1255 to 1275; the sequence is IFIGFMELCVIDELCGFSFIY. One can recognise a Protein kinase domain in the interval 1377–1634; that stretch reads LQILQFLGEG…IIQKLCNHKC (258 aa). Residues 1383–1391 and Lys-1404 each bind ATP; that span reads LGEGALAEV. Catalysis depends on Asp-1500, which acts as the Proton acceptor.

It belongs to the protein kinase superfamily. TKL Ser/Thr protein kinase family.

It localises to the membrane. It carries out the reaction L-seryl-[protein] + ATP = O-phospho-L-seryl-[protein] + ADP + H(+). The catalysed reaction is L-threonyl-[protein] + ATP = O-phospho-L-threonyl-[protein] + ADP + H(+). This Dictyostelium discoideum (Social amoeba) protein is Probable serine/threonine-protein kinase DDB_G0282895.